Reading from the N-terminus, the 597-residue chain is ATP-dependent lipid A-core flippase (597 aa).

The next 6 membrane-spanning stretches (helical) occupy residues 26-46 (WIFA…TGLA), 65-85 (IQII…ANFI), 144-164 (ILTI…MAYL), 166-186 (GLLT…IWWV), 250-270 (AISQ…VIHL), and 276-296 (MLAQ…MLLL). The ABC transmembrane type-1 domain occupies 29-311 (AASIITMAIY…LTKINGTLQR (283 aa)). The 237-residue stretch at 343–579 (IRFEHLSFCY…ESHYAGLYRL (237 aa)) folds into the ABC transporter domain. Residue 377 to 384 (GHSGSGKS) participates in ATP binding.

Belongs to the ABC transporter superfamily. Lipid exporter (TC 3.A.1.106) family. Homodimer.

It localises to the cell inner membrane. It carries out the reaction ATP + H2O + lipid A-core oligosaccharideSide 1 = ADP + phosphate + lipid A-core oligosaccharideSide 2.. Functionally, involved in lipopolysaccharide (LPS) biosynthesis. Translocates lipid A-core from the inner to the outer leaflet of the inner membrane. Transmembrane domains (TMD) form a pore in the inner membrane and the ATP-binding domain (NBD) is responsible for energy generation. The polypeptide is ATP-dependent lipid A-core flippase (Nitrosococcus oceani (strain ATCC 19707 / BCRC 17464 / JCM 30415 / NCIMB 11848 / C-107)).